The chain runs to 846 residues: Neurotactin (846 aa).

The interval 1–222 (MGELEEKETP…EDASDAPPKR (222 aa)) is disordered. Residues 1–324 (MGELEEKETP…LRGYKCSVDD (324 aa)) lie on the Cytoplasmic side of the membrane. Residues 11-20 (PTETTAAQQE) show a composition bias toward low complexity. A compositionally biased stretch (basic and acidic residues) spans 23 to 42 (EEPKETDKMLDKKEDAKEKT). Thr-28 bears the Phosphothreonine; by PKC mark. Residue Thr-42 is modified to Phosphothreonine. Ser-44 carries the phosphoserine modification. Thr-47 is subject to Phosphothreonine. Residues Ser-48 and Ser-52 each carry the phosphoserine modification. The span at 63–74 (AEKKIDDAELAK) shows a compositional bias: basic and acidic residues. Ser-75 carries the phosphoserine; by PKC modification. Phosphoserine is present on Ser-77. Basic and acidic residues-rich tracts occupy residues 95–111 (DSAD…EVKP), 141–155 (LLEK…KEAN), 163–178 (GKDE…ERLR), and 185–205 (PSAE…KSEA). Ser-103 carries the phosphoserine; by PKC modification. Ser-169 bears the Phosphoserine; by PKC mark. Residues Ser-186 and Ser-203 each carry the phosphoserine modification. At Thr-206 the chain carries Phosphothreonine. At Ser-256 the chain carries Phosphoserine. Residue Thr-259 is modified to Phosphothreonine. At Ser-263 the chain carries Phosphoserine. Thr-269 bears the Phosphothreonine mark. Residues 325–346 (ALIVFGILLFVLLLGVIGYVLT) traverse the membrane as a helical; Signal-anchor for type II membrane protein segment. Residues 347-846 (HETLTSPPLR…DIVPRYARVD (500 aa)) lie on the Extracellular side of the membrane. Asn-410, Asn-417, and Asn-428 each carry an N-linked (GlcNAc...) asparagine glycan. 2 cysteine pairs are disulfide-bonded: Cys-422–Cys-437 and Cys-600–Cys-605. N-linked (GlcNAc...) asparagine glycosylation is found at Asn-636, Asn-691, and Asn-720. A disulfide bridge connects residues Cys-738 and Cys-830.

This sequence in the C-terminal section; belongs to the type-B carboxylesterase/lipase family. As to expression, late in embryogenesis, expression is restricted to cells of the peripheral and central nervous system undergoing proliferation and differentiation. Also expressed in larval CNS, mesoderm and imaginal disks.

It is found in the membrane. May mediate or modulate cell adhesion between embryonic cells during development. The sequence is that of Neurotactin (Nrt) from Drosophila melanogaster (Fruit fly).